The chain runs to 583 residues: MTTARRRPKRRGTDARTALRNVPILADIDDEQLERLATTVERRHVPANQWLFHAGEPADSIYIVDSGRFVAVAPEGHVFAEMASGDSIGDLGVIAGAARSAGVRALRDGVVWRIAAETFTDMLEATPLLQSAMLRAMARMLRQSRPAKTARRPRVIGVVSNGDTAAAPMVDAIATSLDSHGRTAVIAPPVETTSAVQEYDELVEAFSETLDRAERSNDWVLVVADRGAGDLWRHYVSAQSDRLVVLVDQRYPPDAVDSLATQRPVHLITCLAEPDPSWWDRLAPVSHHPANSDGFGALARRIAGRSLGLVMAGGGARGLAHFGVYQELTEAGVVIDRFGGTSSGAIASAAFALGMDAGDAIAAAREFIAGSDPLGDYTIPISALTRGGRVDRLVQGFFGNTLIEHLPRGFFSVSADMITGDQIIHRRGSVSGAVRASISIPGLIPPVHNGEQLLVDGGLLNNLPANVMCADTDGEVICVDLRRTFVPSKGFGLLPPIVTPPGLLRRLLTGTDNALPPLQETLLRAFDLAASTANLRELPRVAAIIEPDVSKIGVLNFKQIDAALEAGRMAARAALQAQPDLVR.

Position 24–140 (24–140) interacts with a nucleoside 3',5'-cyclic phosphate; sequence ILADIDDEQL…SAMLRAMARM (117 aa). One can recognise a PNPLA domain in the interval 309 to 469; that stretch reads LVMAGGGARG…LNNLPANVMC (161 aa). The GXGXXG motif lies at 313 to 318; that stretch reads GGGARG. Positions 340–344 match the GXSXG motif; it reads GTSSG. S342 (nucleophile) is an active-site residue. The active-site Proton acceptor is D456. Residues 456–458 carry the DGA/G motif; the sequence is DGG.

Belongs to the NTE family.

This is an uncharacterized protein from Mycobacterium bovis (strain ATCC BAA-935 / AF2122/97).